The following is a 711-amino-acid chain: Long-chain-fatty-acid--CoA ligase 4 (711 aa).

The helical; Signal-anchor for type III membrane protein transmembrane segment at 8 to 28 threads the bilayer; it reads LTIILLPVHLLITIYSALIFI. The Cytoplasmic portion of the chain corresponds to 29–711; sequence PWYFLTNAKK…KDIERMYGGK (683 aa). Phosphoserine is present on serine 447.

It belongs to the ATP-dependent AMP-binding enzyme family. It depends on Mg(2+) as a cofactor. In terms of tissue distribution, abundant in steroidogenic tissues, also found in the kidney, brain and liver.

It is found in the mitochondrion outer membrane. The protein localises to the peroxisome membrane. The protein resides in the microsome membrane. Its subcellular location is the endoplasmic reticulum membrane. It localises to the cell membrane. It catalyses the reaction a long-chain fatty acid + ATP + CoA = a long-chain fatty acyl-CoA + AMP + diphosphate. The catalysed reaction is (5Z,8Z,11Z,14Z)-eicosatetraenoate + ATP + CoA = (5Z,8Z,11Z,14Z)-eicosatetraenoyl-CoA + AMP + diphosphate. It carries out the reaction 15-hydroxy-(5Z,8Z,11Z,13E)-eicosatetraenoate + ATP + CoA = 15-hydroxy-(5Z,8Z,11Z,13E)-eicosatetraenoyl-CoA + AMP + diphosphate. The enzyme catalyses 12-hydroxy-(5Z,8Z,10E,14Z)-eicosatetraenoate + ATP + CoA = 12-hydroxy-(5Z,8Z,10E,14Z)-eicosatetraenoyl-CoA + AMP + diphosphate. It catalyses the reaction 5-hydroxy-(6E,8Z,11Z,14Z)-eicosatetraenoate + ATP + CoA = 5-hydroxy-(6E,8Z,11Z,14Z)-eicosatetraenoyl-CoA + AMP + diphosphate. The catalysed reaction is 5,6-epoxy-(8Z,11Z,14Z)-eicosatrienoate + ATP + CoA = 5,6-epoxy-(8Z,11Z,14Z)-eicosatrienoyl-CoA + AMP + diphosphate. It carries out the reaction 14,15-epoxy-(5Z,8Z,11Z)-eicosatrienoate + ATP + CoA = 14,15-epoxy-(5Z,8Z,11Z)-eicosatrienoyl-CoA + AMP + diphosphate. The enzyme catalyses 11,12-epoxy-(5Z,8Z,14Z)-eicosatrienoate + ATP + CoA = 11,12-epoxy-(5Z,8Z,14Z)-eicosatrienoyl-CoA + AMP + diphosphate. It catalyses the reaction 8,9-epoxy-(5Z,11Z,14Z)-eicosatrienoate + ATP + CoA = 8,9-epoxy-(5Z,11Z,14Z)-eicosatrienoyl-CoA + AMP + diphosphate. The catalysed reaction is hexadecanoate + ATP + CoA = hexadecanoyl-CoA + AMP + diphosphate. It carries out the reaction (E)-hexadec-2-enoate + ATP + CoA = (2E)-hexadecenoyl-CoA + AMP + diphosphate. With respect to regulation, both triacsin C and rosiglitazone inhibit arachidonoyl-CoA ligase activity. Catalyzes the conversion of long-chain fatty acids to their active form acyl-CoA for both synthesis of cellular lipids, and degradation via beta-oxidation. Preferentially activates arachidonate and eicosapentaenoate as substrates. Preferentially activates 8,9-EET &gt; 14,15-EET &gt; 5,6-EET &gt; 11,12-EET. Modulates glucose-stimulated insulin secretion by regulating the levels of unesterified EETs. Modulates prostaglandin E2 secretion. In Mus musculus (Mouse), this protein is Long-chain-fatty-acid--CoA ligase 4 (Acsl4).